We begin with the raw amino-acid sequence, 68 residues long: MRPRDQGFLVLGFTYSVLLISLATFYWLRNNDSFLHYWCVLLLCPATLWLWALIAWCDSEMFASSKDE.

2 helical membrane-spanning segments follow: residues 8–28 and 34–54; these read FLVL…FYWL and FLHY…WALI.

Component of the phosphatidylinositol N-acetylglucosaminyltransferase (GPI-GlcNAc transferase) complex composed of at least GPI1, GPI2, GPI3, GPI15, GPI19 and ERI1. Interacts with GPI2. Interacts with GTP-bound RAS2 in an effector loop-dependent manner.

It localises to the endoplasmic reticulum membrane. It functions in the pathway glycolipid biosynthesis; glycosylphosphatidylinositol-anchor biosynthesis. In terms of biological role, probable component of the GPI-GlcNAc transferase (GPI-GnT) complex in the endoplasmic reticulum, a complex that catalyzes transfer of GlcNAc from UDP-GlcNAc to an acceptor phosphatidylinositol, the first step in the production of GPI-anchors for cell surface proteins. Ras may inhibit the enzyme activity of the GPI-GnT complex via the association between ERI1 and RAS2. This chain is Phosphatidylinositol N-acetylglucosaminyltransferase ERI1 subunit (ERI1), found in Saccharomyces cerevisiae (strain ATCC 204508 / S288c) (Baker's yeast).